A 248-amino-acid polypeptide reads, in one-letter code: MYKLVLIRHGESQWNLENRFTGWHDVDLTDTGREQARNGGRMLKEAGFEFDLAYSSVLTRAIRTLNLVLEEMGQMWLPVERHWRLNERHYGALTGLDKAETAAKHGDEQVKIWRRSFDVPPPDVDESSEHFPAHDPRYRGIDKNVLPKAESLKLTIDRVLPYWHDVIRPSILGGKRVIIAAHGNSLRALVKYLDDMSDAEILDLNIPTGVPLVYDLDADLRPIKREYLGDPEAIKAMMDAVAKQGQAK.

Residues 8–15 (RHGESQWN), 21–22 (TG), Arg-60, 87–90 (ERHY), Lys-98, 114–115 (RR), and 183–184 (GN) each bind substrate. The active-site Tele-phosphohistidine intermediate is the His-9. Glu-87 acts as the Proton donor/acceptor in catalysis.

It belongs to the phosphoglycerate mutase family. BPG-dependent PGAM subfamily. Homodimer.

It carries out the reaction (2R)-2-phosphoglycerate = (2R)-3-phosphoglycerate. The protein operates within carbohydrate degradation; glycolysis; pyruvate from D-glyceraldehyde 3-phosphate: step 3/5. Catalyzes the interconversion of 2-phosphoglycerate and 3-phosphoglycerate. This is 2,3-bisphosphoglycerate-dependent phosphoglycerate mutase from Teredinibacter turnerae (strain ATCC 39867 / T7901).